Reading from the N-terminus, the 145-residue chain is 3-hydroxyacyl-[acyl-carrier-protein] dehydratase FabZ (145 aa).

The active site involves His-47.

This sequence belongs to the thioester dehydratase family. FabZ subfamily.

Its subcellular location is the cytoplasm. The enzyme catalyses a (3R)-hydroxyacyl-[ACP] = a (2E)-enoyl-[ACP] + H2O. Involved in unsaturated fatty acids biosynthesis. Catalyzes the dehydration of short chain beta-hydroxyacyl-ACPs and long chain saturated and unsaturated beta-hydroxyacyl-ACPs. The chain is 3-hydroxyacyl-[acyl-carrier-protein] dehydratase FabZ from Polaromonas naphthalenivorans (strain CJ2).